Consider the following 364-residue polypeptide: Dual-specificity RNA methyltransferase RlmN (364 aa).

The active-site Proton acceptor is E91. A Radical SAM core domain is found at 102–337 (GTLRITQCLS…AIIRKSKGQD (236 aa)). C109 and C342 form a disulfide bridge. [4Fe-4S] cluster-binding residues include C116, C120, and C123. Residues 169–170 (GE), S201, 223–225 (SLH), and N299 contribute to the S-adenosyl-L-methionine site. The active-site S-methylcysteine intermediate is C342.

It belongs to the radical SAM superfamily. RlmN family. [4Fe-4S] cluster serves as cofactor.

Its subcellular location is the cytoplasm. It carries out the reaction adenosine(2503) in 23S rRNA + 2 reduced [2Fe-2S]-[ferredoxin] + 2 S-adenosyl-L-methionine = 2-methyladenosine(2503) in 23S rRNA + 5'-deoxyadenosine + L-methionine + 2 oxidized [2Fe-2S]-[ferredoxin] + S-adenosyl-L-homocysteine. It catalyses the reaction adenosine(37) in tRNA + 2 reduced [2Fe-2S]-[ferredoxin] + 2 S-adenosyl-L-methionine = 2-methyladenosine(37) in tRNA + 5'-deoxyadenosine + L-methionine + 2 oxidized [2Fe-2S]-[ferredoxin] + S-adenosyl-L-homocysteine. Functionally, specifically methylates position 2 of adenine 2503 in 23S rRNA and position 2 of adenine 37 in tRNAs. m2A2503 modification seems to play a crucial role in the proofreading step occurring at the peptidyl transferase center and thus would serve to optimize ribosomal fidelity. The protein is Dual-specificity RNA methyltransferase RlmN of Nitratidesulfovibrio vulgaris (strain DP4) (Desulfovibrio vulgaris).